We begin with the raw amino-acid sequence, 1368 residues long: DNA-directed RNA polymerase subunit beta (1368 aa).

Belongs to the RNA polymerase beta chain family. The RNAP catalytic core consists of 2 alpha, 1 beta, 1 beta' and 1 omega subunit. When a sigma factor is associated with the core the holoenzyme is formed, which can initiate transcription.

The catalysed reaction is RNA(n) + a ribonucleoside 5'-triphosphate = RNA(n+1) + diphosphate. Its function is as follows. DNA-dependent RNA polymerase catalyzes the transcription of DNA into RNA using the four ribonucleoside triphosphates as substrates. In Herminiimonas arsenicoxydans, this protein is DNA-directed RNA polymerase subunit beta.